The primary structure comprises 371 residues: Chorismate synthase (371 aa).

NADP(+) contacts are provided by arginine 48 and arginine 54. FMN-binding positions include arginine 130–serine 132, asparagine 242–alanine 243, glycine 287, lysine 302–serine 306, and arginine 328.

This sequence belongs to the chorismate synthase family. Homotetramer. FMNH2 serves as cofactor.

It catalyses the reaction 5-O-(1-carboxyvinyl)-3-phosphoshikimate = chorismate + phosphate. The protein operates within metabolic intermediate biosynthesis; chorismate biosynthesis; chorismate from D-erythrose 4-phosphate and phosphoenolpyruvate: step 7/7. Catalyzes the anti-1,4-elimination of the C-3 phosphate and the C-6 proR hydrogen from 5-enolpyruvylshikimate-3-phosphate (EPSP) to yield chorismate, which is the branch point compound that serves as the starting substrate for the three terminal pathways of aromatic amino acid biosynthesis. This reaction introduces a second double bond into the aromatic ring system. The protein is Chorismate synthase of Azorhizobium caulinodans (strain ATCC 43989 / DSM 5975 / JCM 20966 / LMG 6465 / NBRC 14845 / NCIMB 13405 / ORS 571).